Consider the following 178-residue polypeptide: Protein RICE FLOWERING LOCUS T 1 (178 aa).

This sequence belongs to the phosphatidylethanolamine-binding protein family. Interacts with FTIP1. As to expression, expressed in leaf vascular tissues. Specifically expressed in the phloem including companion cells.

It is found in the cytoplasm. The protein resides in the nucleus. Its subcellular location is the endoplasmic reticulum. In terms of biological role, probable mobile flower-promoting signal (florigen) that moves from the leaf to the shoot apical meristem (SAM) and induces flowering. Promotes the transition from vegetative growth to flowering under long day (LD) conditions. Acts upstream of MADS14 and MADS15. May also participate in the promotion of flowering under short day (SD) conditions. This Oryza sativa subsp. japonica (Rice) protein is Protein RICE FLOWERING LOCUS T 1.